Here is a 435-residue protein sequence, read N- to C-terminus: Tumor necrosis factor receptor superfamily member 3 (435 aa).

An N-terminal signal peptide occupies residues 1–30 (MLLPWATSAPGLAWGPLVLGLFGLLAASQP). Residues 31–227 (QAVPPYASEN…PPEMSGTMLM (197 aa)) lie on the Extracellular side of the membrane. An N-linked (GlcNAc...) asparagine glycan is attached at Asn40. TNFR-Cys repeat units follow at residues 42–81 (TCRDQEKEYYEPQHRICCSRCPPGTYVSAKCSRIRDTVCA), 82–124 (TCAE…KTQC), 125–168 (RCQP…NHCV), and 169–211 (PCKA…TTCK). 10 cysteine pairs are disulfide-bonded: Cys43–Cys58, Cys59–Cys72, Cys62–Cys80, Cys83–Cys98, Cys101–Cys116, Cys104–Cys124, Cys126–Cys132, Cys139–Cys148, Cys142–Cys167, and Cys170–Cys185. N-linked (GlcNAc...) asparagine glycosylation is present at Asn177. A helical membrane pass occupies residues 228–248 (LAVLLPLAFFLLLATVFSCIW). The Cytoplasmic segment spans residues 249–435 (KSHPSLCRKL…GPRNQFITHD (187 aa)). The residue at position 323 (Ser323) is a Phosphoserine. Pro residues predominate over residues 373–399 (PGPGDLPATPEPPYPIPEEGDPGPPGL). The tract at residues 373–435 (PGPGDLPATP…GPRNQFITHD (63 aa)) is disordered. A compositionally biased stretch (basic and acidic residues) spans 403–417 (HQEDGKAWHLAETEH). Residues 421–435 (TPSNRGPRNQFITHD) are compositionally biased toward polar residues.

Self-associates; dimerization and trimerization are promoted by lymphotoxin (LTA(1)-LTB(2)). Associates with TRAF3. Associates with TRAF4. Associates with TRAF5. Interacts with Aedes aegypti lymphotoxin beta receptor inhibitor; the interaction reduces dimerization and trimerization of LTBR induced by lymphotoxin (LTA(1)-LTB(2)). As to quaternary structure, (Microbial infection) Interacts with HCV core protein.

It localises to the membrane. Its function is as follows. Receptor for the heterotrimeric lymphotoxin containing LTA and LTB, and for TNFS14/LIGHT. Activates NF-kappa-B signaling pathway upon stimulation with lymphotoxin (LTA(1)-LTB(2)). Promotes apoptosis via TRAF3 and TRAF5. May play a role in the development of lymphoid organs. This chain is Tumor necrosis factor receptor superfamily member 3 (LTBR), found in Homo sapiens (Human).